The primary structure comprises 500 residues: Aspartyl/glutamyl-tRNA(Asn/Gln) amidotransferase subunit B (500 aa).

This sequence belongs to the GatB/GatE family. GatB subfamily. As to quaternary structure, heterotrimer of A, B and C subunits.

It catalyses the reaction L-glutamyl-tRNA(Gln) + L-glutamine + ATP + H2O = L-glutaminyl-tRNA(Gln) + L-glutamate + ADP + phosphate + H(+). It carries out the reaction L-aspartyl-tRNA(Asn) + L-glutamine + ATP + H2O = L-asparaginyl-tRNA(Asn) + L-glutamate + ADP + phosphate + 2 H(+). In terms of biological role, allows the formation of correctly charged Asn-tRNA(Asn) or Gln-tRNA(Gln) through the transamidation of misacylated Asp-tRNA(Asn) or Glu-tRNA(Gln) in organisms which lack either or both of asparaginyl-tRNA or glutaminyl-tRNA synthetases. The reaction takes place in the presence of glutamine and ATP through an activated phospho-Asp-tRNA(Asn) or phospho-Glu-tRNA(Gln). The protein is Aspartyl/glutamyl-tRNA(Asn/Gln) amidotransferase subunit B of Thermosynechococcus vestitus (strain NIES-2133 / IAM M-273 / BP-1).